Reading from the N-terminus, the 632-residue chain is Extracellular metalloproteinase 2 (632 aa).

An N-terminal signal peptide occupies residues 1-19; the sequence is MHGLLLAGLAAALPLGVAG. Positions 20–244 are excised as a propeptide; the sequence is LPARQQSGLS…VHNVVDYVAS (225 aa). An N-linked (GlcNAc...) asparagine glycan is attached at asparagine 270. Histidine 429 provides a ligand contact to Zn(2+). Residue glutamate 430 is part of the active site. Histidine 433 is a Zn(2+) binding site.

It belongs to the peptidase M36 family. The cofactor is Zn(2+).

The protein localises to the secreted. In terms of biological role, secreted metalloproteinase probably acting as a virulence factor. The polypeptide is Extracellular metalloproteinase 2 (MEP2) (Trichophyton rubrum (Athlete's foot fungus)).